Consider the following 370-residue polypeptide: Protein STRICTOSIDINE SYNTHASE-LIKE 4 (370 aa).

The signal sequence occupies residues 1-21 (MVLFFSTRFLFFSIFFPCLIS). A glycan (N-linked (GlcNAc...) asparagine) is linked at Asn-101. Tyr-303 carries the phosphotyrosine modification.

Belongs to the strictosidine synthase family.

It is found in the vacuole. This chain is Protein STRICTOSIDINE SYNTHASE-LIKE 4, found in Arabidopsis thaliana (Mouse-ear cress).